A 271-amino-acid polypeptide reads, in one-letter code: 5-deoxy-glucuronate isomerase (271 aa).

Belongs to the isomerase IolB family.

It carries out the reaction 5-deoxy-D-glucuronate = 5-dehydro-2-deoxy-D-gluconate. Its pathway is polyol metabolism; myo-inositol degradation into acetyl-CoA; acetyl-CoA from myo-inositol: step 4/7. Functionally, involved in the isomerization of 5-deoxy-glucuronate (5DG) to 5-dehydro-2-deoxy-D-gluconate (DKG or 2-deoxy-5-keto-D-gluconate). The polypeptide is 5-deoxy-glucuronate isomerase (Bacillus velezensis (strain DSM 23117 / BGSC 10A6 / LMG 26770 / FZB42) (Bacillus amyloliquefaciens subsp. plantarum)).